Here is a 269-residue protein sequence, read N- to C-terminus: GTP cyclohydrolase FolE2 (269 aa).

The protein belongs to the GTP cyclohydrolase IV family.

The catalysed reaction is GTP + H2O = 7,8-dihydroneopterin 3'-triphosphate + formate + H(+). It participates in cofactor biosynthesis; 7,8-dihydroneopterin triphosphate biosynthesis; 7,8-dihydroneopterin triphosphate from GTP: step 1/1. Functionally, converts GTP to 7,8-dihydroneopterin triphosphate. This Burkholderia thailandensis (strain ATCC 700388 / DSM 13276 / CCUG 48851 / CIP 106301 / E264) protein is GTP cyclohydrolase FolE2.